The following is a 34-amino-acid chain: Protamine-Z1/Z2 (34 aa).

A disordered region spans residues 1-34; it reads PRRRRRSSRPVRRRRRYRRSTAARRRRRVVRRRR.

In terms of tissue distribution, testis.

Its subcellular location is the nucleus. The protein resides in the chromosome. Its function is as follows. Protamines substitute for histones in the chromatin of sperm during the haploid phase of spermatogenesis. They compact sperm DNA into a highly condensed, stable and inactive complex. This Sarda orientalis (Striped bonito) protein is Protamine-Z1/Z2.